The chain runs to 306 residues: Prophage bactoprenol glucosyl transferase homolog (306 aa).

At 1–227 the chain is on the cytoplasmic side; sequence MKISLVVPVF…ITSFSTFPLR (227 aa). A helical membrane pass occupies residues 228–248; that stretch reads IWTYIGLVVASVAFIYGAWMI. The Periplasmic portion of the chain corresponds to 249 to 262; it reads LDTIIFGNAVRGYP. A helical transmembrane segment spans residues 263–283; that stretch reads SLLVSILFLGGIQMIGIGVLG. Residues 284–306 lie on the Cytoplasmic side of the membrane; the sequence is EYIGRTYIETKKRPKYIIKRVKK.

This sequence belongs to the glycosyltransferase 2 family. GtrB subfamily.

It localises to the cell inner membrane. Involved in O antigen modification. Catalyzes the transfer of the glucose residue from UDP-glucose to a lipid carrier. In Escherichia coli (strain K12), this protein is Prophage bactoprenol glucosyl transferase homolog (yfdH).